The sequence spans 236 residues: Auxin-responsive protein IAA13 (236 aa).

3 disordered regions span residues 1–24, 52–93, and 105–130; these read MAGADVDVGTELRLGLPGGGGGAA, EAAA…WPPV, and SVKSKKEEEADKQQQQPAANASGSNS. An EAR-like (transcriptional repression) motif is present at residues 12–16; that stretch reads LRLGL. Residues 52-61 show a composition bias toward low complexity; that stretch reads EAAAGKAEAP. The span at 62 to 81 shows a compositional bias: basic and acidic residues; sequence AAEKAKRPAEAAAADAEKPP. The span at 117–130 shows a compositional bias: low complexity; that stretch reads QQQQPAANASGSNS. One can recognise a PB1 domain in the interval 131 to 218; that stretch reads SAFVKVSMDG…SCKRLRIMKG (88 aa).

The protein belongs to the Aux/IAA family. Homodimers and heterodimers.

It localises to the nucleus. In terms of biological role, aux/IAA proteins are short-lived transcriptional factors that function as repressors of early auxin response genes at low auxin concentrations. The chain is Auxin-responsive protein IAA13 (IAA13) from Oryza sativa subsp. japonica (Rice).